Reading from the N-terminus, the 153-residue chain is Large ribosomal subunit protein uL13 (153 aa).

The protein belongs to the universal ribosomal protein uL13 family. Part of the 50S ribosomal subunit.

Its function is as follows. This protein is one of the early assembly proteins of the 50S ribosomal subunit, although it is not seen to bind rRNA by itself. It is important during the early stages of 50S assembly. The sequence is that of Large ribosomal subunit protein uL13 from Chelativorans sp. (strain BNC1).